A 684-amino-acid polypeptide reads, in one-letter code: MEDVFKGIEKEIIKIYKIPERKGRFSNFKFKNKEINELIDALGFKLYLHQVKALKYLYNKKDVVVTTSTASGKSEIFRLAIFDNFLSNPDDRYLLIYPTRALINNQYEKFSMENELFYKITNKRVKAEILTGDVGLEKRREILKDKPNVLFTTPDMLHYQILKNHNNYLWLLKNLKLLVVDELHVYRGVFGTNMVYVFKRLLKLLKRLNNNLQILCLSATLKNPKEFVKLLFNRDFEVVDKSYNPSSRKYLAILEPKNLDNKQLLRRLIENLVDNNIKTLVFFDTRKETEKLMRFLLNSKVFYKLSTYKGTLPKYVREEIEEKFKNGEILALLTTNALELGIDIGDLDAVINYGIPPDGIFSLIQRFGRAGRRDKEALNIIVLRKDGLDYYYKEHLNELYERIRKGIIEYMPVNIKNRFVTKKHLHYLISELKIVDFDELNDFEKEIVKELEREGKIKIYKNPITNKTEIRNVKQPIYSSIRTASDESYYLILDKPWIKSKLLNKTQSEILSFINWLKIKGYVIEEVDKDEYYRSLITGMPYFSRGKLFIAKDKIGIRKFHFIFADELDMFWDVEALQKKEEEIDILDIYDKKSYKDIDIYYGRLRVRKIYEGFIVRGVDVDKYYQELLALKDNGILDAEIDLFKDFFGLNFISVKFNKKIIRDFETDGIWLCYFQIILGMLTK.

Residues 54-239 enclose the Helicase ATP-binding domain; that stretch reads LKYLYNKKDV…LLFNRDFEVV (186 aa). 67–74 is a binding site for ATP; sequence TSTASGKS. The short motif at 181 to 184 is the DEVH box element; that stretch reads DELH. Residues 264–419 enclose the Helicase C-terminal domain; sequence LLRRLIENLV…YMPVNIKNRF (156 aa).

Belongs to the helicase family.

This is an uncharacterized protein from Methanocaldococcus jannaschii (strain ATCC 43067 / DSM 2661 / JAL-1 / JCM 10045 / NBRC 100440) (Methanococcus jannaschii).